An 821-amino-acid chain; its full sequence is Calpain-3 (821 aa).

The segment at 1–34 is disordered; sequence MPTVISASMAPRTGASQVPRTMPQAAQGKGTEAG. Positions 73–417 constitute a Calpain catalytic domain; that stretch reads LYLDPEFPPD…FTKLEICNLT (345 aa). Active-site residues include Cys-128, His-334, and Asn-358. The segment at 418-586 is domain III; the sequence is ADALESDKLQ…KRNLSEEVEN (169 aa). The linker stretch occupies residues 587 to 649; sequence TISVDRPVRK…EPSNTDQESE (63 aa). The disordered stretch occupies residues 603-652; sequence IFVSDRANSNKELGVDQESEEGQDKTSPDKQEKSPKPEPSNTDQESEEQQ. Positions 624-638 are enriched in basic and acidic residues; the sequence is GQDKTSPDKQEKSPK. A compositionally biased stretch (polar residues) spans 641-652; sequence PSNTDQESEEQQ. 4 consecutive EF-hand domains span residues 649 to 683, 692 to 725, 722 to 757, and 787 to 821; these read EEQQ…VVNK, FTLE…KKIK, KKIK…AGFH, and VRLE…TMYA. The interval 650–821 is domain IV; the sequence is EQQQFRNIFR…LEWLQLTMYA (172 aa). Ca(2+) contacts are provided by Ala-662, Asp-665, Glu-667, Glu-672, Asp-705, Asp-707, Ser-709, Arg-711, Glu-716, Asp-735, Asp-737, Ser-739, Thr-741, Glu-746, Asp-800, Asp-802, Asp-804, and Ile-806.

The protein belongs to the peptidase C2 family. In terms of assembly, homodimer; via EF-hand domain 4. Interacts with TTN/titin. Interacts with CMYA5; this interaction, which results in CMYA5 proteolysis, may protect CAPN3 from autolysis. Interacts with SIMC1. Interacts with UTP25; the interaction is required for CAPN3 translocation to the nucleolus. As to expression, skeletal muscle.

It localises to the cytoplasm. The protein localises to the nucleus. The protein resides in the nucleolus. The catalysed reaction is Broad endopeptidase activity.. Its activity is regulated as follows. Activated by micromolar concentrations of calcium and inhibited by calpastatin. Its function is as follows. Calcium-regulated non-lysosomal thiol-protease. Proteolytically cleaves CTBP1. Mediates, with UTP25, the proteasome-independent degradation of p53/TP53. The polypeptide is Calpain-3 (CAPN3) (Sus scrofa (Pig)).